The sequence spans 354 residues: Putative [LysW]-L-2-aminoadipate/[LysW]-L-glutamate phosphate reductase (354 aa).

NADP(+) contacts are provided by residues 10–13 and 34–36; these read SGVI and SRR. Residue Cys153 is part of the active site. Asn321 contributes to the NADP(+) binding site.

It belongs to the NAGSA dehydrogenase family. Type 1 subfamily. LysY sub-subfamily.

The protein resides in the cytoplasm. The enzyme catalyses [amino-group carrier protein]-C-terminal-N-(1-carboxy-5-oxopentan-1-yl)-L-glutamine + phosphate + NADP(+) = [amino-group carrier protein]-C-terminal-N-(1-carboxy-5-phosphooxy-5-oxopentan-1-yl)-L-glutamine + NADPH + H(+). It carries out the reaction [amino-group carrier protein]-C-terminal-gamma-(L-glutamyl-5-semialdehyde)-L-glutamate + phosphate + NADP(+) = [amino-group carrier protein]-C-terminal-gamma-(5-phospho-L-glutamyl)-L-glutamate + NADPH + H(+). It functions in the pathway amino-acid biosynthesis; L-lysine biosynthesis via AAA pathway; L-lysine from L-alpha-aminoadipate (Thermus route): step 3/5. Its pathway is amino-acid biosynthesis; L-arginine biosynthesis. In terms of biological role, involved in both the arginine and lysine biosynthetic pathways. The protein is Putative [LysW]-L-2-aminoadipate/[LysW]-L-glutamate phosphate reductase of Caldivirga maquilingensis (strain ATCC 700844 / DSM 13496 / JCM 10307 / IC-167).